Reading from the N-terminus, the 1049-residue chain is Cilia- and flagella-associated protein 337 (1049 aa).

The EF-hand domain maps to 81–116; the sequence is GTKEEYGELFDKVDVAQDGFINWDKLTSFILLELYE. 6 WD repeats span residues 138 to 177, 358 to 397, 401 to 440, 487 to 528, 531 to 570, and 633 to 671; these read KHKD…QETF, NIAQ…KPVG, GHSA…SIQR, SHEK…KQFT, HGNA…HHTL, and QHHD…AHHV. The interval 691–712 is disordered; that stretch reads LLSAGRSQPSHPMADHSTTGVR. Residues 695 to 711 show a composition bias toward polar residues; sequence GRSQPSHPMADHSTTGV. 3 WD repeats span residues 719 to 766, 769 to 809, and 825 to 866; these read EGKN…LLAE, AHSG…LNSS, and PHED…VWIF.

The protein belongs to the CFAP337 family. As to quaternary structure, associates with components of the nexin-dynein regulatory complex (N-DRC) and the CFAP184:CFAP263 complex.

It is found in the cell projection. It localises to the cilium. Associates with components of the nexin-dynein regulatory complex (N-DRC), a key regulator of ciliary/flagellar motility, and might act as an inner dynein arm (IDA) hub or linkage. The protein is Cilia- and flagella-associated protein 337 of Homo sapiens (Human).